The primary structure comprises 260 residues: Kallikrein-8 (260 aa).

An N-terminal signal peptide occupies residues 1–28 (MGRPPPCAIQTWILLFLLMGAWAGLTRA). Residues 29–32 (QGSK) constitute a propeptide that is removed on maturation. One can recognise a Peptidase S1 domain in the interval 33 to 257 (ILEGQECKPH…YTNWIKKTMG (225 aa)). 6 disulfides stabilise this stretch: cysteine 39–cysteine 173, cysteine 58–cysteine 74, cysteine 145–cysteine 246, cysteine 152–cysteine 218, cysteine 184–cysteine 198, and cysteine 208–cysteine 233. Residue histidine 73 is the Charge relay system of the active site. Asparagine 110 carries N-linked (GlcNAc...) asparagine glycosylation. Catalysis depends on aspartate 120, which acts as the Charge relay system. Catalysis depends on serine 212, which acts as the Charge relay system.

This sequence belongs to the peptidase S1 family. Kallikrein subfamily. As to quaternary structure, interacts with SPINK9. Restricted to hippocampus.

The protein localises to the secreted. Its subcellular location is the cytoplasm. It carries out the reaction Cleavage of amide substrates following the basic amino acids Arg or Lys at the P1 position, with a preference for Arg over Lys.. In terms of biological role, serine protease which is capable of degrading a number of proteins such as casein, fibrinogen, kininogen, fibronectin and collagen type IV. Also cleaves L1CAM in response to increased neural activity. Induces neurite outgrowth and fasciculation of cultured hippocampal neurons. Plays a role in the formation and maturation of orphan and small synaptic boutons in the Schaffer-collateral pathway, regulates Schaffer-collateral long-term potentiation in the hippocampus and is required for memory acquisition and synaptic plasticity. Involved in skin desquamation and keratinocyte proliferation. Plays a role in the secondary phase of pathogenesis following spinal cord injury. In Rattus norvegicus (Rat), this protein is Kallikrein-8 (Klk8).